Here is a 66-residue protein sequence, read N- to C-terminus: Large ribosomal subunit protein bL33c (66 aa).

The protein belongs to the bacterial ribosomal protein bL33 family.

Its subcellular location is the plastid. It localises to the chloroplast. The polypeptide is Large ribosomal subunit protein bL33c (Platanus occidentalis (Sycamore)).